We begin with the raw amino-acid sequence, 344 residues long: Probable dual-specificity RNA methyltransferase RlmN (344 aa).

Glutamate 92 (proton acceptor) is an active-site residue. The Radical SAM core domain occupies 98–325 (DEDRATLCVS…TTIRASRGED (228 aa)). A disulfide bond links cysteine 105 and cysteine 330. Residues cysteine 112, cysteine 116, and cysteine 119 each coordinate [4Fe-4S] cluster. Residues 157–158 (GE), serine 189, 211–213 (SLH), and histidine 287 contribute to the S-adenosyl-L-methionine site. Cysteine 330 acts as the S-methylcysteine intermediate in catalysis.

Belongs to the radical SAM superfamily. RlmN family. The cofactor is [4Fe-4S] cluster.

It localises to the cytoplasm. It carries out the reaction adenosine(2503) in 23S rRNA + 2 reduced [2Fe-2S]-[ferredoxin] + 2 S-adenosyl-L-methionine = 2-methyladenosine(2503) in 23S rRNA + 5'-deoxyadenosine + L-methionine + 2 oxidized [2Fe-2S]-[ferredoxin] + S-adenosyl-L-homocysteine. The catalysed reaction is adenosine(37) in tRNA + 2 reduced [2Fe-2S]-[ferredoxin] + 2 S-adenosyl-L-methionine = 2-methyladenosine(37) in tRNA + 5'-deoxyadenosine + L-methionine + 2 oxidized [2Fe-2S]-[ferredoxin] + S-adenosyl-L-homocysteine. Specifically methylates position 2 of adenine 2503 in 23S rRNA and position 2 of adenine 37 in tRNAs. The chain is Probable dual-specificity RNA methyltransferase RlmN from Bacteroides fragilis (strain YCH46).